The chain runs to 354 residues: Nicotinate-nucleotide--dimethylbenzimidazole phosphoribosyltransferase (354 aa).

Glu317 functions as the Proton acceptor in the catalytic mechanism.

It belongs to the CobT family. Homodimer.

The enzyme catalyses 5,6-dimethylbenzimidazole + nicotinate beta-D-ribonucleotide = alpha-ribazole 5'-phosphate + nicotinate + H(+). It functions in the pathway nucleoside biosynthesis; alpha-ribazole biosynthesis; alpha-ribazole from 5,6-dimethylbenzimidazole: step 1/2. In terms of biological role, catalyzes the synthesis of alpha-ribazole-5'-phosphate from nicotinate mononucleotide (NAMN) and 5,6-dimethylbenzimidazole (DMB). This is Nicotinate-nucleotide--dimethylbenzimidazole phosphoribosyltransferase from Salmonella arizonae (strain ATCC BAA-731 / CDC346-86 / RSK2980).